The primary structure comprises 589 residues: Putative phospholipase B-like 2 (589 aa).

Residues 1–41 (MVGQMYCYPGSHLARALTRALALALVLALLVGPFLSGLAGA) form the signal peptide. N-linked (GlcNAc...) asparagine glycans are attached at residues Asn88 and Asn110. A disulfide bond links Cys142 and Cys152. Residues Asn231, Asn436, and Asn465 are each glycosylated (N-linked (GlcNAc...) asparagine). Cys492 and Cys495 are oxidised to a cystine. The N-linked (GlcNAc...) asparagine glycan is linked to Asn515.

The protein belongs to the phospholipase B-like family. As to quaternary structure, interacts with IGF2R. The p76 protein is synthesized as a 80 kDa precursor which is then processed into a N-terminal 32 kDa form and a C-terminal 45 kDa form. Post-translationally, glycosylated; contains mannose 6-phosphate sugars. Ubiquitously expressed, with highest levels in heart, brain and liver.

The protein localises to the lysosome lumen. In terms of biological role, putative phospholipase. This chain is Putative phospholipase B-like 2 (PLBD2), found in Homo sapiens (Human).